Here is a 414-residue protein sequence, read N- to C-terminus: ORC1-type DNA replication protein 1 (414 aa).

Residues 70–74 (TGKTA), Tyr-213, and Arg-225 contribute to the ATP site.

It belongs to the CDC6/cdc18 family.

In terms of biological role, involved in regulation of DNA replication. This Methanosarcina acetivorans (strain ATCC 35395 / DSM 2834 / JCM 12185 / C2A) protein is ORC1-type DNA replication protein 1 (cdc6-1).